We begin with the raw amino-acid sequence, 446 residues long: Argininosuccinate lyase (446 aa).

This sequence belongs to the lyase 1 family. Argininosuccinate lyase subfamily.

The protein resides in the cytoplasm. The catalysed reaction is 2-(N(omega)-L-arginino)succinate = fumarate + L-arginine. It functions in the pathway amino-acid biosynthesis; L-arginine biosynthesis; L-arginine from L-ornithine and carbamoyl phosphate: step 3/3. The polypeptide is Argininosuccinate lyase (Sulfurisphaera tokodaii (strain DSM 16993 / JCM 10545 / NBRC 100140 / 7) (Sulfolobus tokodaii)).